Here is a 94-residue protein sequence, read N- to C-terminus: Putative pterin-4-alpha-carbinolamine dehydratase (94 aa).

The protein belongs to the pterin-4-alpha-carbinolamine dehydratase family.

The catalysed reaction is (4aS,6R)-4a-hydroxy-L-erythro-5,6,7,8-tetrahydrobiopterin = (6R)-L-erythro-6,7-dihydrobiopterin + H2O. This is Putative pterin-4-alpha-carbinolamine dehydratase from Mycobacterium sp. (strain KMS).